A 521-amino-acid chain; its full sequence is MAQLSSQGNNAIIYLSYAFMLATGLFLAWKFSSNKDFLSSNGTQRGIPLALNFVASAMGVGIITTYAQIANIAGLHGLLVYTICGAIPIVGFAVVGPVIRRKCPDGFILTEWVRHRFGMVTALYLSAFTCLTMFLFMVGELSAIRSAIETLTGLNALGAVIVECVVTTIYTFFGGFRVSFITDNFQGVCVLLLLIICAAGMGSYIEIDTSKIGPSGLLKANKLGWQLVYILFVAIVTNDCFMSGFWLRTFASKTDKDLWIGTSIAAFVTFAICTLIGTTGFLAVWSGDLIVGDENGYDAFFILLSKMPRWLVAFVLIFCIVLSTCTFDSLQSAMVSTISNDVFRNKLHINYVRIMLILIMVPIVVLAVKVADNILQIYLIADLVSAAIIPSVFLGLADTWFWYLRGFDVMAGGLGALLGVFIFGTVYYHSAREGGKLLLIWNGLYDSSDWGPFGAFVIAPVGGVIITLASAALRIAVLYAYSKVTGKEFTALDKPVTVEVENQDHTYGSIDDDESDTKKVV.

Residues 11-31 (AIIYLSYAFMLATGLFLAWKF) form a helical membrane-spanning segment. A glycan (N-linked (GlcNAc...) asparagine) is linked at asparagine 41. 12 consecutive transmembrane segments (helical) span residues 47-67 (IPLA…TTYA), 79-99 (LVYT…GPVI), 117-137 (FGMV…FLFM), 156-176 (ALGA…FGGF), 187-207 (GVCV…YIEI), 227-247 (LVYI…GFWL), 264-284 (IAAF…FLAV), 310-330 (WLVA…FDSL), 354-374 (IMLI…ADNI), 377-397 (IYLI…LGLA), 406-426 (GFDV…FGTV), and 453-473 (FGAF…SAAL).

The protein belongs to the sodium:solute symporter (SSF) (TC 2.A.21) family.

Its subcellular location is the membrane. It catalyses the reaction spermidine(in) = spermidine(out). In terms of biological role, spermidine transporter that is also used by salivary gland-secreted histatin 5 (Hst 5) to enter into candidal cells. A major component of host nonimmune defense systems is salivary histatins, a family of small (3-4 kDa), histidine-rich, cationic proteins secreted by major salivary glands in humans and higher primates. Hst 5 is the most potent of the 12 histatin family members and has fungicidal activity against blastoconidial and filamentous forms of Candida albicans. DUR31 only functions under high concentrations of Hst 5. Hst 5 cojugates to spermidine to be uptaken by DUR31. The sequence is that of Spermidine transporter DUR31 from Candida albicans (strain SC5314 / ATCC MYA-2876) (Yeast).